The sequence spans 178 residues: uncharacterized protein (178 aa).

This sequence belongs to the IIV-6 136R family.

This is an uncharacterized protein from Invertebrate iridescent virus 6 (IIV-6).